The sequence spans 263 residues: Ribonuclease HII (263 aa).

Positions 71 to 262 (QAIAGIDEVG…VKSMCCDSTN (192 aa)) constitute an RNase H type-2 domain. 3 residues coordinate a divalent metal cation: Asp77, Glu78, and Asp172.

The protein belongs to the RNase HII family. The cofactor is Mn(2+). Mg(2+) is required as a cofactor.

Its subcellular location is the cytoplasm. It carries out the reaction Endonucleolytic cleavage to 5'-phosphomonoester.. Endonuclease that specifically degrades the RNA of RNA-DNA hybrids. The polypeptide is Ribonuclease HII (Streptococcus pyogenes serotype M4 (strain MGAS10750)).